The sequence spans 215 residues: Phosphatidylserine decarboxylase proenzyme (215 aa).

Residue Ser186 is the Schiff-base intermediate with substrate; via pyruvic acid of the active site. Ser186 is modified (pyruvic acid (Ser); by autocatalysis).

This sequence belongs to the phosphatidylserine decarboxylase family. PSD-A subfamily. Heterodimer of a large membrane-associated beta subunit and a small pyruvoyl-containing alpha subunit. Pyruvate is required as a cofactor. Post-translationally, is synthesized initially as an inactive proenzyme. Formation of the active enzyme involves a self-maturation process in which the active site pyruvoyl group is generated from an internal serine residue via an autocatalytic post-translational modification. Two non-identical subunits are generated from the proenzyme in this reaction, and the pyruvate is formed at the N-terminus of the alpha chain, which is derived from the carboxyl end of the proenzyme. The post-translation cleavage follows an unusual pathway, termed non-hydrolytic serinolysis, in which the side chain hydroxyl group of the serine supplies its oxygen atom to form the C-terminus of the beta chain, while the remainder of the serine residue undergoes an oxidative deamination to produce ammonia and the pyruvoyl prosthetic group on the alpha chain.

The protein resides in the cell membrane. The enzyme catalyses a 1,2-diacyl-sn-glycero-3-phospho-L-serine + H(+) = a 1,2-diacyl-sn-glycero-3-phosphoethanolamine + CO2. Its pathway is phospholipid metabolism; phosphatidylethanolamine biosynthesis; phosphatidylethanolamine from CDP-diacylglycerol: step 2/2. Catalyzes the formation of phosphatidylethanolamine (PtdEtn) from phosphatidylserine (PtdSer). The sequence is that of Phosphatidylserine decarboxylase proenzyme from Pelagibacter ubique (strain HTCC1062).